The sequence spans 384 residues: Mitogen-activated protein kinase 8 (384 aa).

The Protein kinase domain maps to 26–321 (YQNLRPIGSG…VDEALQHPYI (296 aa)). Residues 33–38 (GSGAQG) and K55 contribute to the ATP site. Residue D151 is the Proton acceptor of the active site. Position 183 is a phosphothreonine (T183). A TXY motif is present at residues 183–185 (TPY). Residue Y185 is modified to Phosphotyrosine.

The protein belongs to the protein kinase superfamily. CMGC Ser/Thr protein kinase family. MAP kinase subfamily. Mg(2+) serves as cofactor. Dually phosphorylated on Thr-183 and Tyr-185, which activates the enzyme.

It is found in the cytoplasm. The protein localises to the nucleus. Its subcellular location is the synapse. It catalyses the reaction L-seryl-[protein] + ATP = O-phospho-L-seryl-[protein] + ADP + H(+). The enzyme catalyses L-threonyl-[protein] + ATP = O-phospho-L-threonyl-[protein] + ADP + H(+). Activated by threonine and tyrosine phosphorylation. Functionally, responds to activation by environmental stress and pro-inflammatory cytokines by phosphorylating a number of transcription factors, primarily components of AP-1 such as c-Jun and ATF2 and thus regulates AP-1 transcriptional activity. May play a role in the regulation of the circadian clock. The chain is Mitogen-activated protein kinase 8 (mapk8) from Danio rerio (Zebrafish).